A 176-amino-acid polypeptide reads, in one-letter code: ATP synthase subunit b 2 (176 aa).

The helical transmembrane segment at 29-49 threads the bilayer; sequence IFWLVITLVIIYMVLSKVALP.

This sequence belongs to the ATPase B chain family. F-type ATPases have 2 components, F(1) - the catalytic core - and F(0) - the membrane proton channel. F(1) has five subunits: alpha(3), beta(3), gamma(1), delta(1), epsilon(1). F(0) has three main subunits: a(1), b(2) and c(10-14). The alpha and beta chains form an alternating ring which encloses part of the gamma chain. F(1) is attached to F(0) by a central stalk formed by the gamma and epsilon chains, while a peripheral stalk is formed by the delta and b chains.

The protein localises to the cell inner membrane. In terms of biological role, f(1)F(0) ATP synthase produces ATP from ADP in the presence of a proton or sodium gradient. F-type ATPases consist of two structural domains, F(1) containing the extramembraneous catalytic core and F(0) containing the membrane proton channel, linked together by a central stalk and a peripheral stalk. During catalysis, ATP synthesis in the catalytic domain of F(1) is coupled via a rotary mechanism of the central stalk subunits to proton translocation. Its function is as follows. Component of the F(0) channel, it forms part of the peripheral stalk, linking F(1) to F(0). The b'-subunit is a diverged and duplicated form of b found in plants and photosynthetic bacteria. The chain is ATP synthase subunit b 2 (atpF2) from Roseobacter denitrificans (strain ATCC 33942 / OCh 114) (Erythrobacter sp. (strain OCh 114)).